Reading from the N-terminus, the 212-residue chain is Response regulator SsrB (212 aa).

Positions 1-138 are required for prevention of DNA binding in absence of phosphorylation and for full stimulation of activity by acidic pH; that stretch reads MKEYKILLVD…PTLNREAILA (138 aa). The 117-residue stretch at 5–121 folds into the Response regulatory domain; it reads KILLVDDHEI…VLLAALQTVA (117 aa). A 4-aspartylphosphate modification is found at aspartate 56. The region spanning 143-208 is the HTH luxR-type domain; the sequence is DTTNHQLLTL…ELLNCARRMR (66 aa). Residues 167–186 constitute a DNA-binding region (H-T-H motif); that stretch reads NHGISEKLHISIKTVETHRM. Cysteine 203 bears the S-nitrosocysteine mark.

Homodimer; disulfide-linked; dimerizes upon DNA-binding. Post-translationally, ssrB phosphorylated on Asp-56 activates the expression of virulence genes whereas the unphosphorylated form controls biofilm formation. Independently of SsrA, can be phosphorylated by small inorganic phosphate donors (such as acetyl phosphate or phosphoramidate). In terms of processing, disulfide bond formation at Cys-203 is not required for dimerization. Cys-203 may serve as a redox sensor that is nitrosylated in presence of reactive nitrogen species (RNS) generated by the host, the modification modulates its DNA-binding activity. Cys-203 is relatively resistant to oxidation by hydrogen peroxide.

It localises to the cytoplasm. Functionally, member of the two-component regulatory system SsrA/SsrB (SpiR/SsrB) that is required for intracellular proliferation and systemic dissemination within the host. When inside acidic Salmonella-containing vesicles (SCV) within host cells the SsrA sensor kinase autophosphorylates and the phosphoryl group is transferred to the response regulator SsrB; phosphorylated SsrB activates the expression of genes encoding virulence proteins, including pathogenicity island 2 (SPI2) and other horizontally acquired genes, but also ancestral genes; it can stimulate gene expression both by recruiting RNA polymerase and by antagonizing the action of the transcriptional repressor hns (H-NS). Can also act independently of sensor kinase ssrA to support the dormant carrier state by directing the transcription of factors required for biofilm formation. DNA-binding is stimulated by acidic pH conditions, and binding promotes bending of DNA both upstream and downstream of binding sites. Binds a degenerate 18-basepair palindromic sequence with a 7-4-7 internal organization, and regulates gene expression from 86 operons. When phosphorylated, activates the transcription of the ABC transporter complex dalSTUV, which helps protect the organism from oxidative killing by host neutrophils. Binds the phoP promoter to stimulate expression in acidic pH conditions. Antagonizes hns to activate the transcription of ugtL. Following invasion of host cells, binds the hilD and hilA regulatory regions to repress their transcription and consequently to repress transcription of pathogenicity island 1 (SPI1) encoding genes involved in host cell invasion. Binds the promoters of the flagellar master regulators flhD and flhC to repress their expression and consequently to suppress flagellar motility and promote evasion of the host inflammasome during infection of host cells. Activates expression of sseI/srfH, sifA, sifB, sseJ and regulates its own expression. When unphosphorylated, relieves the hns-mediated repression of master biofilm regulator csgD by binding and bending the csgD regulatory region. May act as early as in the lumen of the host small intestine, to activate the expression of virulence proteins prior to invasion of host cells. This chain is Response regulator SsrB, found in Salmonella typhimurium (strain LT2 / SGSC1412 / ATCC 700720).